A 585-amino-acid chain; its full sequence is Cytochrome P450 monooxygenase AOL_s00215g278 (585 aa).

A heme-binding site is contributed by C518.

The protein belongs to the cytochrome P450 family. The cofactor is heme.

The protein operates within secondary metabolite biosynthesis; terpenoid biosynthesis. Its function is as follows. Cytochrome P450 monooxygenase; part of the gene cluster that mediates the biosynthesis of sesquiterpenyl epoxy-cyclohexenoids (SECs) such as anthrobotrisins and arthrosporols, metabolites that possess a novel hybrid carbon skeleton consisting of a polyketide-derived epoxycyclohexenol combined with a terpenoid-derived monocyclic sesquiterpenol substructure (PKS-PTS hybrid). The SEC pathway plays an important role for fungal soil colonization via decreasing fungal nematode-capturing ability. Within the pathway, the cytochrome P450 monooxygenase AOL_s00215g278 plays a role in the oxygenation of the phenol moiety, most likely in the epoxy formation. The pathway begins with the biosynthesis of 6-methylsalicylic acid (6-MSA), the first precursor of the polyketide-derived epoxycyclohexenol in arthrosporols, by the polyketide synthase (PKS) AOL_s00215g283 via condensation of 1 acetate and 3 malonate units. The 6-methylsalicylic acid decarboxylase AOL_s00215g281 then catalyzes the decarboxylation of 6-methylsalicylic acid to yield m-cresol. The cytochrome P450 monooxygenase AOL_s00215g282 further oxidizes m-cresol to yield toluquinol. With the assistance of the oxidoreductase AOL_s00215g277, the polyprenyl transferase AOL_s00215g276 catalyzes the farnesylation of toluquinol to produce farnesyl hydroquinone, the hybrid precursor for biosynthesis of SECs. Farnesyl hydroquinone undergoes epoxidation and then subsequent dehydrogenation to form farnesyl epoxy-quinone, the first and simplest SEC. The cytochrome P450 monooxygenase AOL_s00215g278 and the FAD-dependent monooxygenase AOL_s00215g279 might be involved in the oxygenation of the phenol moiety, most likely in the epoxy formation. The cytochrome P450 monooxygenases AOL_s00215g274 and AOL_s00215g280 are involved in specific regional ketone reductions at respectively C-4 and C-1 of farnesyl epoxy-quinone PubMed:33823587. The chain is Cytochrome P450 monooxygenase AOL_s00215g278 from Arthrobotrys oligospora (strain ATCC 24927 / CBS 115.81 / DSM 1491) (Nematode-trapping fungus).